Consider the following 352-residue polypeptide: Uroporphyrinogen decarboxylase (352 aa).

Substrate-binding positions include Arg-27–Arg-31, Asp-77, Tyr-154, Thr-209, and His-325.

This sequence belongs to the uroporphyrinogen decarboxylase family. As to quaternary structure, homodimer.

The protein resides in the cytoplasm. The catalysed reaction is uroporphyrinogen III + 4 H(+) = coproporphyrinogen III + 4 CO2. Its pathway is porphyrin-containing compound metabolism; protoporphyrin-IX biosynthesis; coproporphyrinogen-III from 5-aminolevulinate: step 4/4. Functionally, catalyzes the decarboxylation of four acetate groups of uroporphyrinogen-III to yield coproporphyrinogen-III. In Legionella pneumophila (strain Lens), this protein is Uroporphyrinogen decarboxylase.